The sequence spans 515 residues: 1-pyrroline-5-carboxylate dehydrogenase (515 aa).

Catalysis depends on residues Glu286 and Cys320.

It belongs to the aldehyde dehydrogenase family. RocA subfamily.

It carries out the reaction L-glutamate 5-semialdehyde + NAD(+) + H2O = L-glutamate + NADH + 2 H(+). It participates in amino-acid degradation; L-proline degradation into L-glutamate; L-glutamate from L-proline: step 2/2. This chain is 1-pyrroline-5-carboxylate dehydrogenase, found in Bacillus cereus (strain ATCC 10987 / NRS 248).